The primary structure comprises 75 residues: MNKLAILAIIAMVLFSANAFRFQSRLRSNVEAKTGDACEQAAIQCVESACESLCTEGEDRTGCYMYIYSNCPPYV.

Residues methionine 1–alanine 19 form the signal peptide. Residues phenylalanine 20–glycine 35 constitute a propeptide that is removed on maturation. 3 disulfide bridges follow: cysteine 38-cysteine 54, cysteine 45-cysteine 71, and cysteine 50-cysteine 63.

In terms of assembly, homodimer.

Its subcellular location is the secreted. The protein localises to the cell membrane. In terms of biological role, mating ciliate pheromones (or gamones) are diffusible extracellular communication signals that distinguish different intraspecific classes of cells commonly referred to as 'mating types'. They prepare the latter for conjugation by changing their cell surface properties. The membrane-bound form promotes inter-cellular communication and adhesion for mating pair formation and may act as binding site for the secreted form. This chain is Mating pheromone Er-1/Er-3 (MAT1), found in Euplotes raikovi.